The primary structure comprises 421 residues: Magnesium transporter MRS2-5 (421 aa).

2 helical membrane-spanning segments follow: residues 357–377 (LLLT…AVFG) and 393–413 (YVLL…VLYF). A Required for magnesium transport activity motif is present at residues 377-379 (GMN).

This sequence belongs to the CorA metal ion transporter (MIT) (TC 1.A.35.5) family. Expressed in the whole plant.

It is found in the membrane. Its function is as follows. Magnesium transporter that may mediate the influx of magnesium. The polypeptide is Magnesium transporter MRS2-5 (MRS2-5) (Arabidopsis thaliana (Mouse-ear cress)).